The sequence spans 124 residues: MSTPNCKITTQRLVVNDMKPLSIETEIISLTKEIITHTFIYLINHECIVRKLNEQQATFTFLVNYEMKLLHKVGSTKYNRYTEYNSKYGTFPMPIFINHAGFLECIGIKPTRNTPVIYKYDLNP.

Residues 121-124 (DLNP) carry the DLNP; interaction with MAP1B motif.

The protein belongs to the pneumovirus non-structural protein 2 family. Monomer (instable). Homomultimer. Heteromultimer with NS1. Interacts with host RIGI (via N-terminus); this interaction prevents host signaling pathway involved in interferon production. Interacts with host MAP1B/microtubule-associated protein 1B.

It localises to the host mitochondrion. Plays a major role in antagonizing the type I IFN-mediated antiviral response. Acts cooperatively with NS1 to repress activation and nuclear translocation of host IFN-regulatory factor IRF3. Interacts with the host cytoplasmic sensor of viral nucleic acids RIGI and prevents the interaction with its downstream partner MAVS. Together with NS2, participates in the proteasomal degradation of host STAT2, IRF3, IRF7, TBK1 and RIGI through a NS-degradasome involving CUL2 and Elongin-C. The degradasome requires an intact mitochondrial MAVS. Induces host SOCS1 expression. Induces activation of NF-kappa-B. Suppresses premature apoptosis by an NF-kappa-B-dependent, interferon-independent mechanism promoting continued viral replication. The polypeptide is Non-structural protein 2 (1B) (Ovine respiratory syncytial virus (strain WSU 83-1578) (ORSV)).